A 691-amino-acid polypeptide reads, in one-letter code: Elongation factor G (691 aa).

One can recognise a tr-type G domain in the interval glutamate 8–isoleucine 282. GTP-binding positions include alanine 17 to threonine 24, aspartate 81 to histidine 85, and asparagine 135 to aspartate 138.

This sequence belongs to the TRAFAC class translation factor GTPase superfamily. Classic translation factor GTPase family. EF-G/EF-2 subfamily.

The protein localises to the cytoplasm. Its function is as follows. Catalyzes the GTP-dependent ribosomal translocation step during translation elongation. During this step, the ribosome changes from the pre-translocational (PRE) to the post-translocational (POST) state as the newly formed A-site-bound peptidyl-tRNA and P-site-bound deacylated tRNA move to the P and E sites, respectively. Catalyzes the coordinated movement of the two tRNA molecules, the mRNA and conformational changes in the ribosome. The sequence is that of Elongation factor G from Prochlorococcus marinus (strain SARG / CCMP1375 / SS120).